We begin with the raw amino-acid sequence, 353 residues long: Endophilin-A1 (353 aa).

Positions 1–21 (MSVAGLKKQFHKATQKVSEKV) are membrane-binding amphipathic helix. The tract at residues 1–27 (MSVAGLKKQFHKATQKVSEKVGGAEGT) is disordered. The tract at residues 1-125 (MSVAGLKKQF…DVGEAMKELS (125 aa)) is binds and tubulates liposomes. The region spanning 18 to 249 (SEKVGGAEGT…LEDRIKEASS (232 aa)) is the BAR domain. A required for dimerization upon membrane association region spans residues 60 to 87 (PNPASRAKLSMINTMSKIRGQEKGPGYP). The stretch at 181–201 (EELRQALEKFDESKEIAESSM) forms a coiled coil. The span at 243 to 257 (RIKEASSQPKREYQP) shows a compositional bias: basic and acidic residues. The tract at residues 243–290 (RIKEASSQPKREYQPKPRMSLDFTSGGDNTQHNGGISHATTPKPAGAH) is disordered. Over residues 264-282 (DFTSGGDNTQHNGGISHAT) the composition is skewed to polar residues. Residues 291 to 350 (MDQPCCRALYDFEPENEGELGFKEGDIITLTNQIDENWYEGMLHGQSGFFPINYVDILVP) enclose the SH3 domain.

This sequence belongs to the endophilin family. Monomer; in cytoplasm. Homodimer; when associated with membranes. Associates with MAP4K3. This interaction appears to regulate MAP4K3-mediated JNK activation. Interacts with SYNJ1 and DNM1. In terms of tissue distribution, highly expressed in brain.

It is found in the cytoplasm. It localises to the membrane. The protein localises to the early endosome. The protein resides in the presynapse. Its function is as follows. Implicated in synaptic vesicle endocytosis. May recruit other proteins to membranes with high curvature. The polypeptide is Endophilin-A1 (Gallus gallus (Chicken)).